The sequence spans 510 residues: Cytochrome P450 monooxygenase AFLA_114810 (510 aa).

A signal peptide spans 1–17 (MLILLGLLCLYTGLYVA). Cys-444 is a heme binding site.

This sequence belongs to the cytochrome P450 family. It depends on heme as a cofactor.

It participates in secondary metabolite biosynthesis. Its function is as follows. Cytochrome P450 monooxygenase; part of the gene cluster 41 that mediates the biosynthesis of an extracellular and diffusible metabolite that is able to stimulate colony sclerotial production. The protein is Cytochrome P450 monooxygenase AFLA_114810 of Aspergillus flavus (strain ATCC 200026 / FGSC A1120 / IAM 13836 / NRRL 3357 / JCM 12722 / SRRC 167).